We begin with the raw amino-acid sequence, 370 residues long: Flagellar P-ring protein (370 aa).

Positions 1–27 (MPARPIPVPLLALALAAALAVPSPAAA) are cleaved as a signal peptide.

It belongs to the FlgI family. In terms of assembly, the basal body constitutes a major portion of the flagellar organelle and consists of four rings (L,P,S, and M) mounted on a central rod.

It is found in the periplasm. It localises to the bacterial flagellum basal body. Assembles around the rod to form the L-ring and probably protects the motor/basal body from shearing forces during rotation. The chain is Flagellar P-ring protein from Anaeromyxobacter sp. (strain K).